We begin with the raw amino-acid sequence, 259 residues long: UPF0246 protein PSHAa2558 (259 aa).

The protein belongs to the UPF0246 family.

The polypeptide is UPF0246 protein PSHAa2558 (Pseudoalteromonas translucida (strain TAC 125)).